The chain runs to 71 residues: Sec-independent protein translocase protein TatA (71 aa).

Residues 1-21 traverse the membrane as a helical segment; the sequence is MGSFSIWHWLIVLVIVALIFG. The disordered stretch occupies residues 48 to 71; that stretch reads ADKTEQVTQQQTTIDVQAKEKQNS.

It belongs to the TatA/E family. In terms of assembly, the Tat system comprises two distinct complexes: a TatABC complex, containing multiple copies of TatA, TatB and TatC subunits, and a separate TatA complex, containing only TatA subunits. Substrates initially bind to the TatABC complex, which probably triggers association of the separate TatA complex to form the active translocon.

It localises to the cell inner membrane. Part of the twin-arginine translocation (Tat) system that transports large folded proteins containing a characteristic twin-arginine motif in their signal peptide across membranes. TatA could form the protein-conducting channel of the Tat system. This is Sec-independent protein translocase protein TatA from Bordetella avium (strain 197N).